A 187-amino-acid polypeptide reads, in one-letter code: Inosine triphosphate pyrophosphatase (187 aa).

Residue 11–16 (TSNKNK) coordinates ITP. Glu-39 serves as a coordination point for Mg(2+). ITP is bound by residues Lys-51, 67–68 (DT), Lys-84, 143–146 (FGWD), Lys-164, and 169–170 (HR).

Belongs to the HAM1 NTPase family. Homodimer. Mg(2+) serves as cofactor. It depends on Mn(2+) as a cofactor.

The protein localises to the cytoplasm. It is found in the nucleus. It catalyses the reaction ITP + H2O = IMP + diphosphate + H(+). The catalysed reaction is dITP + H2O = dIMP + diphosphate + H(+). The enzyme catalyses XTP + H2O = XMP + diphosphate + H(+). Its function is as follows. Pyrophosphatase that hydrolyzes non-canonical purine nucleotides such as inosine triphosphate (ITP), deoxyinosine triphosphate (dITP) or xanthosine 5'-triphosphate (XTP) to their respective monophosphate derivatives. The enzyme does not distinguish between the deoxy- and ribose forms. Probably excludes non-canonical purines from RNA and DNA precursor pools, thus preventing their incorporation into RNA and DNA and avoiding chromosomal lesions. The protein is Inosine triphosphate pyrophosphatase of Aspergillus fumigatus (strain ATCC MYA-4609 / CBS 101355 / FGSC A1100 / Af293) (Neosartorya fumigata).